Here is a 39-residue protein sequence, read N- to C-terminus: MEQNPNPNNLPAELNRTSLYLGLLLVFVTAVLFTSYFFN.

A helical membrane pass occupies residues 18 to 38 (SLYLGLLLVFVTAVLFTSYFF).

The protein belongs to the PsbL family. As to quaternary structure, PSII is composed of 1 copy each of membrane proteins PsbA, PsbB, PsbC, PsbD, PsbE, PsbF, PsbH, PsbI, PsbJ, PsbK, PsbL, PsbM, PsbT, PsbX, PsbY, Psb30/Ycf12, peripheral proteins PsbO, CyanoQ (PsbQ), PsbU, PsbV and a large number of cofactors. It forms dimeric complexes.

It is found in the cellular thylakoid membrane. Its function is as follows. One of the components of the core complex of photosystem II (PSII). PSII is a light-driven water:plastoquinone oxidoreductase that uses light energy to abstract electrons from H(2)O, generating O(2) and a proton gradient subsequently used for ATP formation. It consists of a core antenna complex that captures photons, and an electron transfer chain that converts photonic excitation into a charge separation. This subunit is found at the monomer-monomer interface and is required for correct PSII assembly and/or dimerization. The protein is Photosystem II reaction center protein L of Prochlorococcus marinus (strain MIT 9313).